The chain runs to 261 residues: NAD(P)H-quinone oxidoreductase subunit K, chloroplastic (261 aa).

[4Fe-4S] cluster-binding residues include cysteine 43, cysteine 44, cysteine 108, and cysteine 139.

It belongs to the complex I 20 kDa subunit family. NDH is composed of at least 16 different subunits, 5 of which are encoded in the nucleus. Requires [4Fe-4S] cluster as cofactor.

It localises to the plastid. The protein localises to the chloroplast thylakoid membrane. It catalyses the reaction a plastoquinone + NADH + (n+1) H(+)(in) = a plastoquinol + NAD(+) + n H(+)(out). It carries out the reaction a plastoquinone + NADPH + (n+1) H(+)(in) = a plastoquinol + NADP(+) + n H(+)(out). In terms of biological role, NDH shuttles electrons from NAD(P)H:plastoquinone, via FMN and iron-sulfur (Fe-S) centers, to quinones in the photosynthetic chain and possibly in a chloroplast respiratory chain. The immediate electron acceptor for the enzyme in this species is believed to be plastoquinone. Couples the redox reaction to proton translocation, and thus conserves the redox energy in a proton gradient. The chain is NAD(P)H-quinone oxidoreductase subunit K, chloroplastic from Cycas taitungensis (Prince sago).